Reading from the N-terminus, the 275-residue chain is MRFSANISWLFPEVPDFPGRIKAASQSGFRAVEVAWPYATDRTLFKAALNTHRMSLVLLNTPPGNIEAGELGLAAVPGRQDEFRTGLNEAVSWASDLGCDRIHIMAGRVPLGLERQFIEKEMEETFIENLQYAADILGQAGMVGLLEPINSLITEPRYFLNTPQHAASILHKVKRPNLKLQMDLYHWQIMGGNLTQNIKTYFPLIGHVQIAQIPHRNEPDSPGELNFMYLFDLLQDLGYQGYVGCEYKPQGDTVKGLGWMEKYLKNCDGDEDKTK.

Residues Glu147 and Glu246 each act as proton donor/acceptor in the active site.

Belongs to the hyi family.

The enzyme catalyses 3-hydroxypyruvate = 2-hydroxy-3-oxopropanoate. In terms of biological role, catalyzes the reversible isomerization between hydroxypyruvate and 2-hydroxy-3-oxopropanoate (also termed tartronate semialdehyde). The chain is Putative hydroxypyruvate isomerase (hyi) from Xenopus laevis (African clawed frog).